We begin with the raw amino-acid sequence, 172 residues long: MLDAFAKVVAQADARGEFLSNTQLDALSSMVAEGNKRLDVVNKINSNASAIVTNSARALFAEQPQLIQPGGNAYTNRRMAACLRDMEIVLRYVSYAMIAGDSSVLDDRCLNGLRETYQALGTPGSSVSVAVQKMKEASVALANDLTGTPQGDCSALVAELGSYFDRAAVSVV.

The residue at position 72 (Asn72) is an N4-methylasparagine. Cys82 and Cys153 together coordinate (2R,3E)-phycocyanobilin.

The protein belongs to the phycobiliprotein family. Heterodimer of an alpha and a beta subunit, which further assembles into trimers and the trimers into hexamers. The basic functional unit of phycobiliproteins is a ring-shaped hexamer formed from two back-to-back trimers contacting via the alpha chain subunits. The trimers are composed of alpha/beta subunit heterodimers arranged around a three-fold axis of symmetry. The phycoerythrins also contain a gamma subunit which is located in the center of the hexamer. Post-translationally, contains two covalently linked bilin chromophores.

The protein resides in the plastid. It is found in the chloroplast thylakoid membrane. Its function is as follows. Light-harvesting photosynthetic bile pigment-protein from the phycobiliprotein complex (phycobilisome, PBS). Phycocyanin is the major phycobiliprotein in the PBS rod. The protein is C-phycocyanin beta chain (cpcB) of Porphyra purpurea (Red seaweed).